A 171-amino-acid polypeptide reads, in one-letter code: Protein phosphatase 1 regulatory subunit 1A (171 aa).

Met-1 is subject to N-acetylmethionine. Residues 9–12 (KIQF) are essential for activity. The interval 17 to 171 (LEPHLDPEAA…PLDSQGASLV (155 aa)) is disordered. The span at 19–29 (PHLDPEAAEQI) shows a compositional bias: basic and acidic residues. A Phosphothreonine; by PKA modification is found at Thr-35. The segment at 42 to 54 (TSDQSSPEVDEDR) is essential for activity. Phosphoserine occurs at positions 43, 46, 47, and 67. A compositionally biased stretch (polar residues) spans 122-133 (GSASRPDTSGTA). A compositionally biased stretch (basic and acidic residues) spans 137–148 (AESKPKTQEQRG). The interaction with PPP1R15A stretch occupies residues 143–171 (TQEQRGVEPSTEDLSAHMLPLDSQGASLV).

This sequence belongs to the protein phosphatase inhibitor 1 family. Interacts with PPP1R15A. Post-translationally, phosphorylation of Thr-35 is required for activity.

Its function is as follows. Inhibitor of protein-phosphatase 1. This protein may be important in hormonal control of glycogen metabolism. Hormones that elevate intracellular cAMP increase I-1 activity in many tissues. I-1 activation may impose cAMP control over proteins that are not directly phosphorylated by PKA. Following a rise in intracellular calcium, I-1 is inactivated by calcineurin (or PP2B). Does not inhibit type-2 phosphatases. The chain is Protein phosphatase 1 regulatory subunit 1A (Ppp1r1a) from Rattus norvegicus (Rat).